Reading from the N-terminus, the 267-residue chain is Diphthine synthase (267 aa).

Residues L9, D87, I90, 115–116 (SI), L166, L205, and H230 each bind S-adenosyl-L-methionine.

Belongs to the diphthine synthase family. As to quaternary structure, homodimer.

It carries out the reaction 2-[(3S)-amino-3-carboxypropyl]-L-histidyl-[translation elongation factor 2] + 3 S-adenosyl-L-methionine = diphthine-[translation elongation factor 2] + 3 S-adenosyl-L-homocysteine + 3 H(+). It participates in protein modification; peptidyl-diphthamide biosynthesis. Its function is as follows. S-adenosyl-L-methionine-dependent methyltransferase that catalyzes the trimethylation of the amino group of the modified target histidine residue in translation elongation factor 2 (EF-2), to form an intermediate called diphthine. The three successive methylation reactions represent the second step of diphthamide biosynthesis. The protein is Diphthine synthase of Staphylothermus marinus (strain ATCC 43588 / DSM 3639 / JCM 9404 / F1).